The sequence spans 112 residues: T cell receptor alpha variable 7 (112 aa).

The signal sequence occupies residues 1 to 21 (MEKMRRPVLIIFCLCLGWANG). The Ig-like domain maps to 22-112 (ENQVEHSPHF…DSATYFCAVD (91 aa)). Cysteines 44 and 109 form a disulfide. N-linked (GlcNAc...) asparagine glycans are attached at residues Asn-84 and Asn-90.

Alpha-beta TR is a heterodimer composed of an alpha and beta chain; disulfide-linked. The alpha-beta TR is associated with the transmembrane signaling CD3 coreceptor proteins to form the TR-CD3 (TcR or TCR). The assembly of alpha-beta TR heterodimers with CD3 occurs in the endoplasmic reticulum where a single alpha-beta TR heterodimer associates with one CD3D-CD3E heterodimer, one CD3G-CD3E heterodimer and one CD247 homodimer forming a stable octameric structure. CD3D-CD3E and CD3G-CD3E heterodimers preferentially associate with TR alpha and TR beta chains, respectively. The association of the CD247 homodimer is the last step of TcR assembly in the endoplasmic reticulum and is required for transport to the cell surface.

It is found in the cell membrane. Functionally, v region of the variable domain of T cell receptor (TR) alpha chain that participates in the antigen recognition. Alpha-beta T cell receptors are antigen specific receptors which are essential to the immune response and are present on the cell surface of T lymphocytes. Recognize peptide-major histocompatibility (MH) (pMH) complexes that are displayed by antigen presenting cells (APC), a prerequisite for efficient T cell adaptive immunity against pathogens. Binding of alpha-beta TR to pMH complex initiates TR-CD3 clustering on the cell surface and intracellular activation of LCK that phosphorylates the ITAM motifs of CD3G, CD3D, CD3E and CD247 enabling the recruitment of ZAP70. In turn ZAP70 phosphorylates LAT, which recruits numerous signaling molecules to form the LAT signalosome. The LAT signalosome propagates signal branching to three major signaling pathways, the calcium, the mitogen-activated protein kinase (MAPK) kinase and the nuclear factor NF-kappa-B (NF-kB) pathways, leading to the mobilization of transcription factors that are critical for gene expression and essential for T cell growth and differentiation. The T cell repertoire is generated in the thymus, by V-(D)-J rearrangement. This repertoire is then shaped by intrathymic selection events to generate a peripheral T cell pool of self-MH restricted, non-autoaggressive T cells. Post-thymic interaction of alpha-beta TR with the pMH complexes shapes TR structural and functional avidity. This chain is T cell receptor alpha variable 7, found in Homo sapiens (Human).